Consider the following 268-residue polypeptide: Eukaryotic translation initiation factor 3 subunit G-2 (268 aa).

Positions S187–P265 constitute an RRM domain.

Belongs to the eIF-3 subunit G family. Component of the eukaryotic translation initiation factor 3 (eIF-3) complex. The eIF-3 complex interacts with pix.

The protein localises to the cytoplasm. RNA-binding component of the eukaryotic translation initiation factor 3 (eIF-3) complex, which is involved in protein synthesis of a specialized repertoire of mRNAs and, together with other initiation factors, stimulates binding of mRNA and methionyl-tRNAi to the 40S ribosome. The eIF-3 complex specifically targets and initiates translation of a subset of mRNAs involved in cell proliferation. This subunit can bind 18S rRNA. This chain is Eukaryotic translation initiation factor 3 subunit G-2, found in Drosophila willistoni (Fruit fly).